Consider the following 320-residue polypeptide: Fe-S cluster assembly protein dre2 (320 aa).

The interval 1–130 is N-terminal SAM-like domain; the sequence is MAKQTLLLSP…KPDIEEMQAV (130 aa). The tract at residues 131 to 213 is linker; that stretch reads PLRLGRKNDH…DNLLDDSELS (83 aa). Residues 141-166 form a disordered region; it reads LAGAPSLEGSAAEHPFPPEVSEGKTA. 4 residues coordinate [2Fe-2S] cluster: C222, C233, C236, and C238. Residues 222–238 form a fe-S binding site A region; that stretch reads CRPKAGKRRRACKDCTC. Residues C283, C286, C294, and C297 each contribute to the [4Fe-4S] cluster site. 2 short sequence motifs (cx2C motif) span residues 283-286 and 294-297; these read CGNC and CEGC. The segment at 283 to 297 is fe-S binding site B; that stretch reads CGNCSLGDAFRCEGC.

This sequence belongs to the anamorsin family. In terms of assembly, monomer. Interacts with tah18. Interacts with mia40. It depends on [2Fe-2S] cluster as a cofactor. The cofactor is [4Fe-4S] cluster.

The protein localises to the cytoplasm. Its subcellular location is the mitochondrion intermembrane space. Its function is as follows. Component of the cytosolic iron-sulfur (Fe-S) protein assembly (CIA) machinery required for the maturation of extramitochondrial Fe-S proteins. Part of an electron transfer chain functioning in an early step of cytosolic Fe-S biogenesis, facilitating the de novo assembly of a [4Fe-4S] cluster on the scaffold complex cfd1-nbp35. Electrons are transferred to dre2 from NADPH via the FAD- and FMN-containing protein tah18. Tah18-dre2 are also required for the assembly of the diferric tyrosyl radical cofactor of ribonucleotide reductase (RNR), probably by providing electrons for reduction during radical cofactor maturation in the catalytic small subunit rnr2. This is Fe-S cluster assembly protein dre2 from Neosartorya fischeri (strain ATCC 1020 / DSM 3700 / CBS 544.65 / FGSC A1164 / JCM 1740 / NRRL 181 / WB 181) (Aspergillus fischerianus).